A 575-amino-acid polypeptide reads, in one-letter code: Urease subunit alpha (575 aa).

A Urease domain is found at 138–575 (GAVDCHVHLI…LPMAQRYFLF (438 aa)). 3 residues coordinate Ni(2+): His-143, His-145, and Lys-226. Lys-226 bears the N6-carboxylysine mark. A substrate-binding site is contributed by His-228. Positions 255 and 281 each coordinate Ni(2+). Residue His-329 is the Proton donor of the active site. Residue Asp-369 coordinates Ni(2+).

It belongs to the metallo-dependent hydrolases superfamily. Urease alpha subunit family. Heterotrimer of UreA (gamma), UreB (beta) and UreC (alpha) subunits. Three heterotrimers associate to form the active enzyme. The cofactor is Ni cation. Post-translationally, carboxylation allows a single lysine to coordinate two nickel ions.

It localises to the cytoplasm. The enzyme catalyses urea + 2 H2O + H(+) = hydrogencarbonate + 2 NH4(+). It participates in nitrogen metabolism; urea degradation; CO(2) and NH(3) from urea (urease route): step 1/1. The protein is Urease subunit alpha of Frankia alni (strain DSM 45986 / CECT 9034 / ACN14a).